We begin with the raw amino-acid sequence, 159 residues long: Ribosomal RNA large subunit methyltransferase H (159 aa).

Residues Leu76, Gly108, and 127-132 each bind S-adenosyl-L-methionine; that span reads FGKMTL.

It belongs to the RNA methyltransferase RlmH family. In terms of assembly, homodimer.

Its subcellular location is the cytoplasm. It carries out the reaction pseudouridine(1915) in 23S rRNA + S-adenosyl-L-methionine = N(3)-methylpseudouridine(1915) in 23S rRNA + S-adenosyl-L-homocysteine + H(+). Functionally, specifically methylates the pseudouridine at position 1915 (m3Psi1915) in 23S rRNA. The protein is Ribosomal RNA large subunit methyltransferase H of Lysinibacillus sphaericus (strain C3-41).